Reading from the N-terminus, the 373-residue chain is XK-related protein 9 (373 aa).

8 helical membrane-spanning segments follow: residues Phe-8 to Val-28, Tyr-38 to Phe-58, Ala-166 to Leu-186, Ile-203 to Leu-223, Leu-224 to Ile-244, Cys-256 to Phe-276, Val-295 to Pro-315, and Phe-318 to Val-338.

It belongs to the XK family. Post-translationally, undergoes proteolytic processing by caspase-3 (CASP3), caspase-6 (CASP6) and caspase-7 (CASP7) to generate the XK-related protein 9, processed form, leading to its activation.

The protein resides in the cell membrane. The enzyme catalyses a 1,2-diacyl-sn-glycero-3-phospho-L-serine(in) = a 1,2-diacyl-sn-glycero-3-phospho-L-serine(out). With respect to regulation, activated upon caspase cleavage to generate the XK-related protein 9, processed form. Does not act prior the onset of apoptosis. Its function is as follows. Phospholipid scramblase that promotes phosphatidylserine exposure on apoptotic cell surface. Phosphatidylserine is a specific marker only present at the surface of apoptotic cells and acts as a specific signal for engulfment. In Homo sapiens (Human), this protein is XK-related protein 9.